A 106-amino-acid polypeptide reads, in one-letter code: Large ribosomal subunit protein eL30 (106 aa).

The protein belongs to the eukaryotic ribosomal protein eL30 family.

This is Large ribosomal subunit protein eL30 from Methanococcus maripaludis (strain C5 / ATCC BAA-1333).